The sequence spans 488 residues: Signal recognition particle receptor FtsY (488 aa).

Positions 14–82 (DTAPEDVSKP…AVPDDAVHGG (69 aa)) are disordered. Residues 32 to 67 (VGTSSTGSPVGTGAAMPAAQDAPSPAAPHAIATPDD) show a composition bias toward low complexity. GTP is bound by residues 287–294 (GVNGVGKT), 369–373 (DTAGR), and 433–436 (TKLD).

It belongs to the GTP-binding SRP family. FtsY subfamily. Part of the signal recognition particle protein translocation system, which is composed of SRP and FtsY. SRP is a ribonucleoprotein composed of Ffh and a 4.5S RNA molecule.

Its subcellular location is the cell inner membrane. The protein localises to the cytoplasm. The catalysed reaction is GTP + H2O = GDP + phosphate + H(+). In terms of biological role, involved in targeting and insertion of nascent membrane proteins into the cytoplasmic membrane. Acts as a receptor for the complex formed by the signal recognition particle (SRP) and the ribosome-nascent chain (RNC). Interaction with SRP-RNC leads to the transfer of the RNC complex to the Sec translocase for insertion into the membrane, the hydrolysis of GTP by both Ffh and FtsY, and the dissociation of the SRP-FtsY complex into the individual components. In Nitratidesulfovibrio vulgaris (strain ATCC 29579 / DSM 644 / CCUG 34227 / NCIMB 8303 / VKM B-1760 / Hildenborough) (Desulfovibrio vulgaris), this protein is Signal recognition particle receptor FtsY.